A 1109-amino-acid chain; its full sequence is Cation channel sperm-associated auxiliary subunit beta (1109 aa).

At 1 to 1055 (MESPLIYVML…QIYVDEVPLP (1055 aa)) the chain is on the extracellular side. A disulfide bridge connects residues C35 and C60. N-linked (GlcNAc...) asparagine glycans are attached at residues N66, N90, and N118. C189 and C302 form a disulfide bridge. N-linked (GlcNAc...) asparagine glycosylation is present at N321. C330 and C343 are oxidised to a cystine. The N-linked (GlcNAc...) asparagine glycan is linked to N672. 4 disulfides stabilise this stretch: C720-C818, C831-C1039, C913-C922, and C924-C939. N915 and N923 each carry an N-linked (GlcNAc...) asparagine glycan. An N-linked (GlcNAc...) asparagine glycan is attached at N1017. The chain crosses the membrane as a helical span at residues 1056–1078 (FPGHALIAVATSVVLGVLIFIAF). Residues 1079–1109 (VFQLRNIHPLKALKKSIRGNPGLTSSTTVSS) lie on the Cytoplasmic side of the membrane.

Component of the CatSper complex or CatSpermasome composed of the core pore-forming members CATSPER1, CATSPER2, CATSPER3 and CATSPER4 as well as auxiliary members CATSPERB, CATSPERG2, CATSPERD, CATSPERE, CATSPERZ, C2CD6/CATSPERT, SLCO6C1, TMEM249, TMEM262 and EFCAB9. HSPA1 may be an additional auxiliary complex member. The core complex members CATSPER1, CATSPER2, CATSPER3 and CATSPER4 form a heterotetrameric channel. The auxiliary CATSPERB, CATSPERG2, CATSPERD and CATSPERE subunits form a pavilion-like structure over the pore which stabilizes the complex through interactions with CATSPER4, CATSPER3, CATSPER1 and CATSPER2 respectively. SLCO6C1 interacts with CATSPERE and TMEM262/CATSPERH interacts with CATSPERB, further stabilizing the complex. C2CD6/CATSPERT interacts at least with CATSPERD and is required for targeting the CatSper complex in the flagellar membrane. In terms of tissue distribution, testis-specific. Specifically present in the principal piece of sperm tail (at protein level). Specifically expressed in the seminiferous tubules but not in the interstitial cells. Within the tubules, it is expressed in spermatocytes and spermatids, but not in spermatogonia.

It is found in the cell projection. Its subcellular location is the cilium. The protein resides in the flagellum membrane. Functionally, auxiliary component of the CatSper complex, a complex involved in sperm cell hyperactivation. Sperm cell hyperactivation is needed for sperm motility which is essential late in the preparation of sperm for fertilization. This Mus musculus (Mouse) protein is Cation channel sperm-associated auxiliary subunit beta.